Here is a 309-residue protein sequence, read N- to C-terminus: tRNA dimethylallyltransferase (309 aa).

10–17 (GPTASGKT) contacts ATP. Position 12–17 (12–17 (TASGKT)) interacts with substrate. 2 interaction with substrate tRNA regions span residues 35–38 (DSAL) and 240–245 (RCVGYR).

This sequence belongs to the IPP transferase family. As to quaternary structure, monomer. Requires Mg(2+) as cofactor.

It catalyses the reaction adenosine(37) in tRNA + dimethylallyl diphosphate = N(6)-dimethylallyladenosine(37) in tRNA + diphosphate. Catalyzes the transfer of a dimethylallyl group onto the adenine at position 37 in tRNAs that read codons beginning with uridine, leading to the formation of N6-(dimethylallyl)adenosine (i(6)A). In Baumannia cicadellinicola subsp. Homalodisca coagulata, this protein is tRNA dimethylallyltransferase.